A 208-amino-acid chain; its full sequence is Small ribosomal subunit protein uS4 (208 aa).

The tract at residues 24–52 is disordered; it reads GVKPFDVKTKKANKAPGQHGQARGGKQSE. Residues 98 to 160 form the S4 RNA-binding domain; sequence SRLDNVVYRM…AKQQLRIKNA (63 aa).

This sequence belongs to the universal ribosomal protein uS4 family. In terms of assembly, part of the 30S ribosomal subunit. Contacts protein S5. The interaction surface between S4 and S5 is involved in control of translational fidelity.

One of the primary rRNA binding proteins, it binds directly to 16S rRNA where it nucleates assembly of the body of the 30S subunit. In terms of biological role, with S5 and S12 plays an important role in translational accuracy. In Acinetobacter baumannii (strain ATCC 17978 / DSM 105126 / CIP 53.77 / LMG 1025 / NCDC KC755 / 5377), this protein is Small ribosomal subunit protein uS4.